The chain runs to 146 residues: ATP synthase epsilon chain (146 aa).

A disordered region spans residues 103 to 122; that stretch reads SAKKRAEQHMQEAKEKHNER.

The protein belongs to the ATPase epsilon chain family. In terms of assembly, F-type ATPases have 2 components, CF(1) - the catalytic core - and CF(0) - the membrane proton channel. CF(1) has five subunits: alpha(3), beta(3), gamma(1), delta(1), epsilon(1). CF(0) has three main subunits: a, b and c.

It localises to the cell membrane. Functionally, produces ATP from ADP in the presence of a proton gradient across the membrane. The polypeptide is ATP synthase epsilon chain (Lactobacillus johnsonii (strain CNCM I-12250 / La1 / NCC 533)).